Consider the following 168-residue polypeptide: NADH-quinone oxidoreductase subunit I (168 aa).

2 consecutive 4Fe-4S ferredoxin-type domains span residues 58 to 88 and 99 to 128; these read LRRY…IEAG and VRYD…EGPN. Residues Cys-68, Cys-71, Cys-74, Cys-78, Cys-108, Cys-111, Cys-114, and Cys-118 each contribute to the [4Fe-4S] cluster site.

This sequence belongs to the complex I 23 kDa subunit family. As to quaternary structure, NDH-1 is composed of 14 different subunits. Subunits NuoA, H, J, K, L, M, N constitute the membrane sector of the complex. [4Fe-4S] cluster is required as a cofactor.

The protein localises to the cell inner membrane. It carries out the reaction a quinone + NADH + 5 H(+)(in) = a quinol + NAD(+) + 4 H(+)(out). Functionally, NDH-1 shuttles electrons from NADH, via FMN and iron-sulfur (Fe-S) centers, to quinones in the respiratory chain. The immediate electron acceptor for the enzyme in this species is believed to be ubiquinone. Couples the redox reaction to proton translocation (for every two electrons transferred, four hydrogen ions are translocated across the cytoplasmic membrane), and thus conserves the redox energy in a proton gradient. This is NADH-quinone oxidoreductase subunit I from Bradyrhizobium diazoefficiens (strain JCM 10833 / BCRC 13528 / IAM 13628 / NBRC 14792 / USDA 110).